The primary structure comprises 587 residues: Methylcrotonoyl-CoA carboxylase beta chain, mitochondrial (587 aa).

The N-terminal 26 residues, 1-26 (MLRILGRRVVSASKELTSIQQWRIRP), are a transit peptide targeting the mitochondrion. Residues 68 to 324 (MEGILSELRS…AAKQGMEGTF (257 aa)) enclose the CoA carboxyltransferase N-terminal domain. Residues 68 to 579 (MEGILSELRS…SAALNRPLED (512 aa)) are carboxyltransferase. The CoA carboxyltransferase C-terminal domain occupies 333-579 (EPLYDINELR…SAALNRPLED (247 aa)). Residues 367-396 (EFDEFKKQYGTTLVTGFARIYGQTVGIIGN) are acyl-CoA binding.

It belongs to the AccD/PCCB family. Probably a heterodimer composed of biotin-containing alpha subunits and beta subunits. In terms of tissue distribution, in roots, cotyledons, leaves, flowers, ovaries, siliques and embryos.

The protein localises to the mitochondrion matrix. The enzyme catalyses 3-methylbut-2-enoyl-CoA + hydrogencarbonate + ATP = 3-methyl-(2E)-glutaconyl-CoA + ADP + phosphate + H(+). It functions in the pathway amino-acid degradation; L-leucine degradation; (S)-3-hydroxy-3-methylglutaryl-CoA from 3-isovaleryl-CoA: step 2/3. In terms of biological role, carboxyltransferase subunit of the 3-methylcrotonyl-CoA carboxylase, an enzyme that catalyzes the conversion of 3-methylcrotonyl-CoA to 3-methylglutaconyl-CoA, a critical step for leucine and isovaleric acid catabolism. This chain is Methylcrotonoyl-CoA carboxylase beta chain, mitochondrial (MCCB), found in Arabidopsis thaliana (Mouse-ear cress).